The following is a 304-amino-acid chain: Non-specific ribonucleoside hydrolase RihC (304 aa).

The active site involves His233.

The protein belongs to the IUNH family. RihC subfamily.

Its function is as follows. Hydrolyzes both purine and pyrimidine ribonucleosides with a broad-substrate specificity. In Escherichia coli O7:K1 (strain IAI39 / ExPEC), this protein is Non-specific ribonucleoside hydrolase RihC.